A 276-amino-acid polypeptide reads, in one-letter code: Octanoyltransferase LipM (276 aa).

A BPL/LPL catalytic domain is found at 33–247 (GELKPTLRFY…GFKDAFSLTF (215 aa)). Cysteine 150 acts as the Acyl-thioester intermediate in catalysis.

This sequence belongs to the octanoyltransferase LipM family. As to quaternary structure, monomer.

The enzyme catalyses octanoyl-[ACP] + L-lysyl-[protein] = N(6)-octanoyl-L-lysyl-[protein] + holo-[ACP] + H(+). Its pathway is protein modification; protein lipoylation via endogenous pathway; protein N(6)-(lipoyl)lysine from octanoyl-[acyl-carrier-protein]. In terms of biological role, catalyzes the transfer of endogenously produced octanoic acid from octanoyl-acyl-carrier-protein onto the lipoyl domain of GcvH, an intermediate carrier during protein lipoylation. The chain is Octanoyltransferase LipM from Exiguobacterium sp. (strain ATCC BAA-1283 / AT1b).